The chain runs to 463 residues: RuvB-like 2 (463 aa).

Position 2 is an N-acetylalanine (Ala2). Residue Lys9 forms a Glycyl lysine isopeptide (Lys-Gly) (interchain with G-Cter in SUMO2) linkage. Position 77-84 (77-84 (GQPGTGKT)) interacts with ATP. Ser437 is subject to Phosphoserine. Glycyl lysine isopeptide (Lys-Gly) (interchain with G-Cter in SUMO2) cross-links involve residues Lys444 and Lys456.

It belongs to the RuvB family. In terms of assembly, forms homohexameric rings. Can form a dodecamer with RUVBL1 made of two stacked hexameric rings; however, even though RUVBL1 and RUVBL2 are present in equimolar ratio, the oligomeric status of each hexamer is not known. Oligomerization may regulate binding to nucleic acids and conversely, binding to nucleic acids may affect the dodecameric assembly. Interaction of the complex with DHX34 results in conformational changes of the N-terminus of the RUVBL2 subunits, resulting in loss of nucleotide binding ability and ATP hydrolysis of the complex. Interacts with the transcriptional activation domain of MYC. Interacts with ATF2. Component of the RNA polymerase II holoenzyme complex. May also act to bridge the LEF1/TCF1-CTNNB1 complex and TBP. Component of the NuA4 histone acetyltransferase complex which contains the catalytic subunit KAT5/TIP60 and the subunits EP400, TRRAP/PAF400, BRD8/SMAP, EPC1, DMAP1/DNMAP1, RUVBL1/TIP49, RUVBL2, ING3, actin, ACTL6A/BAF53A, MORF4L1/MRG15, MORF4L2/MRGX, MRGBP, YEATS4/GAS41, VPS72/YL1 and MEAF6. The NuA4 complex interacts with MYC and the adenovirus E1A protein. RUVBL2 interacts with EP400. Component of a NuA4-related complex which contains EP400, TRRAP/PAF400, SRCAP, BRD8/SMAP, EPC1, DMAP1/DNMAP1, RUVBL1/TIP49, RUVBL2, actin, ACTL6A/BAF53A, VPS72 and YEATS4/GAS41. Interacts with NPAT. Component of the chromatin-remodeling INO80 complex; specifically part of a complex module associated with the helicase ATP-binding and the helicase C-terminal domain of INO80. Component of some MLL1/MLL complex, at least composed of the core components KMT2A/MLL1, ASH2L, HCFC1/HCF1, WDR5 and RBBP5, as well as the facultative components BACC1, CHD8, E2F6, HSP70, INO80C, KANSL1, LAS1L, MAX, MCRS1, MGA, MYST1/MOF, PELP1, PHF20, PRP31, RING2, RUVB1/TIP49A, RUVB2/TIP49B, SENP3, TAF1, TAF4, TAF6, TAF7, TAF9 and TEX10. Interacts with IGHMBP2. Interacts with TELO2. Interacts with HINT1. Component of a SWR1-like complex. Component of the R2TP complex composed at least of RUVBL1, RUVBL2, RPAP3 and PIHD1. Component of the PAQosome complex which is responsible for the biogenesis of several protein complexes and which consists of R2TP complex members RUVBL1, RUVBL2, RPAP3 and PIH1D1, URI complex members PFDN2, PFDN6, PDRG1, UXT and URI1 as well as ASDURF, POLR2E and DNAAF10/WDR92. Interacts with ITFG1. Interacts with ZMYND10. Interacts with WAC; WAC positively regulates MTOR activity by promoting the assembly of the TTT complex composed of TELO2, TTI1 and TTI2 and the RUVBL complex composed of RUVBL1 and RUVBL2 into the TTT-RUVBL complex which leads to the dimerization of the mTORC1 complex and its subsequent activation. Forms a complex with APPL1 and APPL2. Interacts with ZNHIT2 (via HIT-type zinc finger) in the presence of ATP or ADP; shows a stronger interaction in the presence of ADP. The RUVBL1/RUVBL2 complex interacts with ZNHIT1 (via HIT-type zinc finger), ZNHIT3 (via HIT-type zinc finger), ZNHIT6 (via HIT-type zinc finger) and DDX59/ZNHIT5 (via HIT-type zinc finger) in the presence of ADP. Interacts with NOPCHAP1; the interaction is direct and disrupted upon ATP binding. Interacts with SMG1.

It localises to the nucleus matrix. Its subcellular location is the nucleus. The protein resides in the nucleoplasm. The protein localises to the cytoplasm. It is found in the membrane. It localises to the dynein axonemal particle. It catalyses the reaction ATP + H2O = ADP + phosphate + H(+). Possesses single-stranded DNA-stimulated ATPase and ATP-dependent DNA helicase (5' to 3') activity; hexamerization is thought to be critical for ATP hydrolysis and adjacent subunits in the ring-like structure contribute to the ATPase activity. Component of the NuA4 histone acetyltransferase complex which is involved in transcriptional activation of select genes principally by acetylation of nucleosomal histones H4 and H2A. This modification may both alter nucleosome-DNA interactions and promote interaction of the modified histones with other proteins which positively regulate transcription. This complex may be required for the activation of transcriptional programs associated with oncogene and proto-oncogene mediated growth induction, tumor suppressor mediated growth arrest and replicative senescence, apoptosis, and DNA repair. The NuA4 complex ATPase and helicase activities seem to be, at least in part, contributed by the association of RUVBL1 and RUVBL2 with EP400. NuA4 may also play a direct role in DNA repair when recruited to sites of DNA damage. Component of a SWR1-like complex that specifically mediates the removal of histone H2A.Z/H2AZ1 from the nucleosome. Proposed core component of the chromatin remodeling INO80 complex which exhibits DNA- and nucleosome-activated ATPase activity and catalyzes ATP-dependent nucleosome sliding. Plays an essential role in oncogenic transformation by MYC and also modulates transcriptional activation by the LEF1/TCF1-CTNNB1 complex. May also inhibit the transcriptional activity of ATF2. Involved in the endoplasmic reticulum (ER)-associated degradation (ERAD) pathway where it negatively regulates expression of ER stress response genes. May play a role in regulating the composition of the U5 snRNP complex. The chain is RuvB-like 2 (Ruvbl2) from Mus musculus (Mouse).